We begin with the raw amino-acid sequence, 312 residues long: MQSYKYDKAIVPESKNGGSPALNNNPRKGGSKRVLLICLDLFCLFMAALPFLIIETSTIKPYRRGFYCNDESIKYPLKVSETINDAVLCAVGIVIAILAIITGEFYRIYYLKEKSRSTTQNPYVAALYKQVGCFLFGCAISQSFTDIAKVSIGRLRPHFLSVCDPDFSQINCSEGYIQNYRCRGEDSKVQEARKSFFSGHASFSMFTMLYLVLYLQARFTWRGARLLRPLLQFTLLMMAFYTGLSRVSDYKHHPSDVLAGFAQGALVACCIVFFVSDLFKTKTSLSLPAPAIRREILSPVDIIDRNNHHNMV.

At 1–33 (MQSYKYDKAIVPESKNGGSPALNNNPRKGGSKR) the chain is on the cytoplasmic side. Phosphoserine is present on S19. A helical membrane pass occupies residues 34-54 (VLLICLDLFCLFMAALPFLII). Residues 55–85 (ETSTIKPYRRGFYCNDESIKYPLKVSETIND) are Extracellular-facing. A helical transmembrane segment spans residues 86 to 106 (AVLCAVGIVIAILAIITGEFY). Residues 107–123 (RIYYLKEKSRSTTQNPY) are Cytoplasmic-facing. A Dityrosine basolateral targeting motif motif is present at residues 109–110 (YY). A helical transmembrane segment spans residues 124 to 144 (VAALYKQVGCFLFGCAISQSF). Topologically, residues 145-194 (TDIAKVSIGRLRPHFLSVCDPDFSQINCSEGYIQNYRCRGEDSKVQEARK) are extracellular. Positions 149–157 (KVSIGRLRP) are phosphatase sequence motif I. The N-linked (GlcNAc...) asparagine glycan is linked to N171. Residues 183-185 (RGE) carry the Integrin-binding motif motif. Residues 195–215 (SFFSGHASFSMFTMLYLVLYL) traverse the membrane as a helical segment. The interval 197–200 (FSGH) is phosphatase sequence motif II. The active-site Proton donors is the H200. Residues 216–226 (QARFTWRGARL) are Cytoplasmic-facing. A helical transmembrane segment spans residues 227–244 (LRPLLQFTLLMMAFYTGL). The tract at residues 245-256 (SRVSDYKHHPSD) is phosphatase sequence motif III. Residues 245 to 258 (SRVSDYKHHPSDVL) lie on the Extracellular side of the membrane. The active-site Nucleophile is the H252. Residues 259–279 (AGFAQGALVACCIVFFVSDLF) form a helical membrane-spanning segment. The interval 276 to 312 (SDLFKTKTSLSLPAPAIRREILSPVDIIDRNNHHNMV) is mediates interaction with CTNND1. The Cytoplasmic segment spans residues 280–312 (KTKTSLSLPAPAIRREILSPVDIIDRNNHHNMV).

It belongs to the PA-phosphatase related phosphoesterase family. Forms functional homodimers and homooligomers that are not required for substrate recognition and catalytic activity. Can also form heterooligomers with other PLPP2 and PLPP3. Interacts with CTNND1; negatively regulates the PLPP3-mediated stabilization of beta-catenin/CTNNB1. Post-translationally, N-glycosylated. Contains high-mannose oligosaccharides. As to expression, detected in lung, cerebellum and heart atrium.

Its subcellular location is the cell membrane. The protein resides in the basolateral cell membrane. The protein localises to the endoplasmic reticulum membrane. It localises to the endoplasmic reticulum-Golgi intermediate compartment membrane. It is found in the golgi apparatus membrane. Its subcellular location is the golgi apparatus. The protein resides in the trans-Golgi network membrane. The protein localises to the membrane raft. The catalysed reaction is a 1,2-diacyl-sn-glycero-3-phosphate + H2O = a 1,2-diacyl-sn-glycerol + phosphate. It carries out the reaction 1,2-dihexadecanoyl-sn-glycero-3-phosphate + H2O = 1,2-dihexadecanoyl-sn-glycerol + phosphate. The enzyme catalyses 1,2-di-(9Z-octadecenoyl)-sn-glycero-3-phosphate + H2O = 1,2-di-(9Z-octadecenoyl)-sn-glycerol + phosphate. It catalyses the reaction a monoacyl-sn-glycero-3-phosphate + H2O = a monoacylglycerol + phosphate. The catalysed reaction is (9Z)-octadecenoyl-sn-glycero-3-phosphate + H2O = (9Z-octadecenoyl)-glycerol + phosphate. It carries out the reaction sphing-4-enine 1-phosphate + H2O = sphing-4-enine + phosphate. The enzyme catalyses an N-acylsphing-4-enine 1-phosphate + H2O = an N-acylsphing-4-enine + phosphate. It catalyses the reaction N-(octanoyl)-sphing-4-enine-1-phosphate + H2O = N-octanoylsphing-4-enine + phosphate. The catalysed reaction is N-(9Z-octadecenoyl)-ethanolamine phosphate + H2O = N-(9Z-octadecenoyl) ethanolamine + phosphate. It participates in lipid metabolism; phospholipid metabolism. Its activity is regulated as follows. Magnesium-independent phospholipid phosphatase. Insensitive to N-ethylmaleimide. In terms of biological role, magnesium-independent phospholipid phosphatase of the plasma membrane that catalyzes the dephosphorylation of a variety of glycerolipid and sphingolipid phosphate esters including phosphatidate/PA, lysophosphatidate/LPA, diacylglycerol pyrophosphate/DGPP, sphingosine 1-phosphate/S1P and ceramide 1-phosphate/C1P. Also acts on N-oleoyl ethanolamine phosphate/N-(9Z-octadecenoyl)-ethanolamine phosphate, a potential physiological compound. Has both an extracellular and an intracellular phosphatase activity, allowing the hydrolysis and the cellular uptake of these bioactive lipid mediators from the milieu, regulating signal transduction in different cellular processes. Through the dephosphorylation of extracellular sphingosine-1-phosphate and the regulation of its extra- and intracellular availability, plays a role in vascular homeostasis, regulating endothelial cell migration, adhesion, survival, proliferation and the production of pro-inflammatory cytokines. By maintaining the appropriate levels of this lipid in the cerebellum, also ensure its proper development and function. Through its intracellular lipid phosphatase activity may act in early compartments of the secretory pathway, regulating the formation of Golgi to endoplasmic reticulum retrograde transport carriers. Independently of this phosphatase activity may also function in the Wnt signaling pathway and the stabilization of beta-catenin/CTNNB1, thereby regulating cell proliferation, migration and differentiation in angiogenesis or yet in tumor growth. Also plays a role in integrin-mediated cell-cell adhesion in angiogenesis. The chain is Phospholipid phosphatase 3 from Mus musculus (Mouse).